The following is a 414-amino-acid chain: EARP and GARP complex-interacting protein 1 (414 aa).

Met1 is subject to N-acetylmethionine. 4 WD repeats span residues 159-199, 209-249, 253-293, and 297-337; these read TAHG…SQAV, KGQL…QIYC, AHGQ…EPVK, and EHSH…SEPF. The disordered stretch occupies residues 337–362; sequence FGHLVDDDDISDQEDHRSEEKSKEPL. At Ser347 the chain carries Phosphoserine. The segment covering 349–362 has biased composition (basic and acidic residues); it reads QEDHRSEEKSKEPL. A WD 5 repeat occupies 372-412; it reads EHEDSVYAVDWSSADPWLFASLSYDGRLVINRVPRALKYHI.

It belongs to the WD repeat EIPR1 family. As to quaternary structure, interacts with two multisubunit tethering complexes: EARP composed of VPS50, VPS51, VPS52 and VPS53 subunits and GARP complex composed of VPS51, VPS52, VPS53 and VPS54 subunits. Interacts with SNAP29.

The protein resides in the golgi apparatus. The protein localises to the trans-Golgi network. Its function is as follows. Acts as a component of endosomal retrieval machinery that is involved in protein transport from early endosomes to either recycling endosomes or the trans-Golgi network. Mediates the recruitment of Golgi-associated retrograde protein (GARP) complex to the trans-Golgi network and controls early endosome-to-Golgi transport of internalized protein. Promotes the recycling of internalized transferrin receptor (TFRC) to the plasma membrane through interaction with endosome-associated recycling protein (EARP) complex. Controls proper insulin distribution and secretion, and retention of cargo in mature dense core vesicles. Required for the stability of the endosome-associated retrograde protein (EARP) complex subunits and for proper localization and association of EARP with membranes. This is EARP and GARP complex-interacting protein 1 from Pongo abelii (Sumatran orangutan).